A 337-amino-acid polypeptide reads, in one-letter code: RNA 3'-terminal phosphate cyclase (337 aa).

Residues Gln-100 and 281-285 contribute to the ATP site; that span reads YMGDQ. Residue His-306 is the Tele-AMP-histidine intermediate of the active site.

Belongs to the RNA 3'-terminal cyclase family. Type 1 subfamily.

It is found in the cytoplasm. It catalyses the reaction a 3'-end 3'-phospho-ribonucleotide-RNA + ATP = a 3'-end 2',3'-cyclophospho-ribonucleotide-RNA + AMP + diphosphate. Functionally, catalyzes the conversion of 3'-phosphate to a 2',3'-cyclic phosphodiester at the end of RNA. The mechanism of action of the enzyme occurs in 3 steps: (A) adenylation of the enzyme by ATP; (B) transfer of adenylate to an RNA-N3'P to produce RNA-N3'PP5'A; (C) and attack of the adjacent 2'-hydroxyl on the 3'-phosphorus in the diester linkage to produce the cyclic end product. The biological role of this enzyme is unknown but it is likely to function in some aspects of cellular RNA processing. This chain is RNA 3'-terminal phosphate cyclase (rtcA), found in Methanothermobacter thermautotrophicus (strain ATCC 29096 / DSM 1053 / JCM 10044 / NBRC 100330 / Delta H) (Methanobacterium thermoautotrophicum).